A 247-amino-acid chain; its full sequence is Protein Thf1 (247 aa).

Residues 198–224 adopt a coiled-coil conformation; it reads IAQVRQAMDDILEAQKKRREADQAKKE. The segment at 209-247 is disordered; that stretch reads LEAQKKRREADQAKKEGSDDTPTTEASTPDSEPTSEVSS. Residues 210–226 are compositionally biased toward basic and acidic residues; sequence EAQKKRREADQAKKEGS. Positions 228–247 are enriched in polar residues; sequence DTPTTEASTPDSEPTSEVSS.

Belongs to the THF1 family.

Its function is as follows. May be involved in photosynthetic membrane biogenesis. The protein is Protein Thf1 of Acaryochloris marina (strain MBIC 11017).